The sequence spans 308 residues: 4-hydroxy-tetrahydrodipicolinate synthase (308 aa).

Residue Thr56 coordinates pyruvate. Catalysis depends on Tyr144, which acts as the Proton donor/acceptor. Lys172 (schiff-base intermediate with substrate) is an active-site residue. Val212 contributes to the pyruvate binding site.

It belongs to the DapA family. Homotetramer; dimer of dimers.

It localises to the cytoplasm. It carries out the reaction L-aspartate 4-semialdehyde + pyruvate = (2S,4S)-4-hydroxy-2,3,4,5-tetrahydrodipicolinate + H2O + H(+). Its pathway is amino-acid biosynthesis; L-lysine biosynthesis via DAP pathway; (S)-tetrahydrodipicolinate from L-aspartate: step 3/4. Functionally, catalyzes the condensation of (S)-aspartate-beta-semialdehyde [(S)-ASA] and pyruvate to 4-hydroxy-tetrahydrodipicolinate (HTPA). This is 4-hydroxy-tetrahydrodipicolinate synthase from Kineococcus radiotolerans (strain ATCC BAA-149 / DSM 14245 / SRS30216).